A 196-amino-acid polypeptide reads, in one-letter code: MRENRGWEVFSLLTSTEVYEERVVEVPEDVQLTIEGDSFRGYTLKAVGPKGENTRYLKYRGVFIEVGDGKVRVYTTSPKKKHKAMVGTFAGHIENLITGVKEGFEYHLKVVYAHFPIKVRVEGNEVIIENFIGEKHPRRAKIVGRAQVEISGQDIYVRGIDIEECGQTAANLEQATKIKRKDPRVFQDGIYIVKKP.

Belongs to the universal ribosomal protein uL6 family. As to quaternary structure, part of the 50S ribosomal subunit.

In terms of biological role, this protein binds to the 23S rRNA, and is important in its secondary structure. It is located near the subunit interface in the base of the L7/L12 stalk, and near the tRNA binding site of the peptidyltransferase center. The polypeptide is Large ribosomal subunit protein uL6 (Archaeoglobus fulgidus (strain ATCC 49558 / DSM 4304 / JCM 9628 / NBRC 100126 / VC-16)).